Consider the following 297-residue polypeptide: Formylmethanofuran--tetrahydromethanopterin formyltransferase (297 aa).

It belongs to the FTR family. In terms of assembly, homotetramer.

It is found in the cytoplasm. The enzyme catalyses N-formylmethanofuran + 5,6,7,8-tetrahydromethanopterin + H(+) = N(5)-formyl-5,6,7,8-tetrahydromethanopterin + methanofuran. Its pathway is one-carbon metabolism; methanogenesis from CO(2); 5,10-methenyl-5,6,7,8-tetrahydromethanopterin from CO(2): step 2/3. Its function is as follows. Catalyzes the reversible transfer of a formyl group from formylmethanofuran (formyl-MFR) to tetrahydromethanopterin (H(4)MPT) to produce 5-formyl tetrahydromethanopterin (5-formyl-H(4)MPT) and methanofuran (MFR). This is Formylmethanofuran--tetrahydromethanopterin formyltransferase from Methanosarcina mazei (strain ATCC BAA-159 / DSM 3647 / Goe1 / Go1 / JCM 11833 / OCM 88) (Methanosarcina frisia).